The chain runs to 392 residues: Retrovirus-related Pol polyprotein from type-1 retrotransposable element R1 4 (392 aa).

One can recognise a Reverse transcriptase domain in the interval 1-230 (PFADDLAVLV…GGVVIRRRPE (230 aa)). Positions 231–392 (GLKENYNRVL…DEGLSSESEE (162 aa)) are nucleic acid-binding endonuclease.

It carries out the reaction DNA(n) + a 2'-deoxyribonucleoside 5'-triphosphate = DNA(n+1) + diphosphate. The sequence is that of Retrovirus-related Pol polyprotein from type-1 retrotransposable element R1 4 from Nasonia vitripennis (Parasitic wasp).